Consider the following 858-residue polypeptide: Ubiquitin carboxyl-terminal hydrolase 13 (858 aa).

The residue at position 112 (Ser112) is a Phosphoserine. The UBP-type; degenerate zinc-finger motif lies at 185–293 (PVSKYANNLV…KHLAHFGIDM (109 aa)). 4 residues coordinate Zn(2+): Cys209, Cys212, Cys229, and His242. Lys309 is covalently cross-linked (Glycyl lysine isopeptide (Lys-Gly) (interchain with G-Cter in SUMO2)). A USP domain is found at 334-856 (TGLKNLGNSC…LGYMYFYRRI (523 aa)). Catalysis depends on Cys343, which acts as the Nucleophile. Lys403 participates in a covalent cross-link: Glycyl lysine isopeptide (Lys-Gly) (interchain with G-Cter in SUMO2). UBA domains follow at residues 650–691 (DIDE…IIVH) and 722–762 (QPPE…IFSH). The Proton acceptor role is filled by His818.

Belongs to the peptidase C19 family. As to quaternary structure, interacts with UFD1. Interacts (via UBA domains) with SIAH2 (when ubiquitinated). Interacts with BAG6; the interaction is direct and may mediate UBL4A deubiquitination. Interacts (via UBA 2 domain) with AMFR; the interaction is direct. Interacts with UBL4A; may be indirect via BAG6. Interacts with NEDD4.

The protein resides in the cytoplasm. The enzyme catalyses Thiol-dependent hydrolysis of ester, thioester, amide, peptide and isopeptide bonds formed by the C-terminal Gly of ubiquitin (a 76-residue protein attached to proteins as an intracellular targeting signal).. Specifically inhibited by spautin-1 (specific and potent autophagy inhibitor-1), a derivative of MBCQ that binds to USP13 and inhibits deubiquitinase activity. Regulated by PIK3C3/VPS34-containing complexes. The weak deubiquitinase activity in vitro suggests the existence of some mechanism that activates the enzyme. Its function is as follows. Deubiquitinase that mediates deubiquitination of target proteins such as BECN1, MITF, SKP2 and USP10 and is involved in various processes such as autophagy, endoplasmic reticulum-associated degradation (ERAD), cell cycle progression or DNA damage response. Component of a regulatory loop that controls autophagy and p53/TP53 levels: mediates deubiquitination of BECN1, a key regulator of autophagy, leading to stabilize the PIK3C3/VPS34-containing complexes. Alternatively, forms with NEDD4 a deubiquitination complex, which subsequently stabilizes VPS34 to promote autophagy. Also deubiquitinates USP10, an essential regulator of p53/TP53 stability. In turn, PIK3C3/VPS34-containing complexes regulate USP13 stability, suggesting the existence of a regulatory system by which PIK3C3/VPS34-containing complexes regulate p53/TP53 protein levels via USP10 and USP13. Recruited by nuclear UFD1 and mediates deubiquitination of SKP2, thereby regulating endoplasmic reticulum-associated degradation (ERAD). Also regulates ERAD through the deubiquitination of UBL4A a component of the BAG6/BAT3 complex. Mediates stabilization of SIAH2 independently of deubiquitinase activity: binds ubiquitinated SIAH2 and acts by impairing SIAH2 autoubiquitination. Regulates the cell cycle progression by stabilizing cell cycle proteins such as SKP2 and AURKB. In addition, plays an important role in maintaining genomic stability and in DNA replication checkpoint activation via regulation of RAP80 and TOPBP1. Deubiquitinates the multifunctional protein HMGB1 and subsequently drives its nucleocytoplasmic localization and its secretion. Positively regulates type I and type II interferon signalings by deubiquitinating STAT1 but negatively regulates antiviral response by deubiquitinating STING1. This Mus musculus (Mouse) protein is Ubiquitin carboxyl-terminal hydrolase 13 (Usp13).